The following is a 166-amino-acid chain: Dihydrofolate reductase (166 aa).

In terms of domain architecture, DHFR spans 6 to 164; sequence KISLIVAMDK…YDYYFHIYER (159 aa). 10-12 is a substrate binding site; the sequence is IVA. NADP(+) contacts are provided by residues 11-12 and 19-24; these read VA and IGKDND. Asp32 contacts substrate. Residue 48-51 coordinates NADP(+); the sequence is GRKN. Arg62 contacts substrate. Residues 67-70 and 100-105 contribute to the NADP(+) site; these read LTRD and FGGEQI. Position 119 (Thr119) interacts with substrate.

This sequence belongs to the dihydrofolate reductase family.

It catalyses the reaction (6S)-5,6,7,8-tetrahydrofolate + NADP(+) = 7,8-dihydrofolate + NADPH + H(+). It functions in the pathway cofactor biosynthesis; tetrahydrofolate biosynthesis; 5,6,7,8-tetrahydrofolate from 7,8-dihydrofolate: step 1/1. Functionally, key enzyme in folate metabolism. Catalyzes an essential reaction for de novo glycine and purine synthesis, and for DNA precursor synthesis. This chain is Dihydrofolate reductase (dfrD), found in Staphylococcus haemolyticus.